The sequence spans 191 residues: Fe/S biogenesis protein NfuA (191 aa).

[4Fe-4S] cluster contacts are provided by cysteine 149 and cysteine 152.

This sequence belongs to the NfuA family. Homodimer. It depends on [4Fe-4S] cluster as a cofactor.

Functionally, involved in iron-sulfur cluster biogenesis. Binds a 4Fe-4S cluster, can transfer this cluster to apoproteins, and thereby intervenes in the maturation of Fe/S proteins. Could also act as a scaffold/chaperone for damaged Fe/S proteins. The polypeptide is Fe/S biogenesis protein NfuA (Pectobacterium atrosepticum (strain SCRI 1043 / ATCC BAA-672) (Erwinia carotovora subsp. atroseptica)).